A 518-amino-acid polypeptide reads, in one-letter code: Calcium/calmodulin-dependent protein kinase kinase cmkC (518 aa).

Positions 1–72 (MANEGAGSLQ…SEYTLSQDDG (72 aa)) are disordered. 2 stretches are compositionally biased toward polar residues: residues 8–17 (SLQQDASPGS) and 60–71 (NARSEYTLSQDD). The Protein kinase domain maps to 81–376 (YVIKQEIGRG…MDELREHPWV (296 aa)). ATP contacts are provided by residues 87-95 (IGRGSFGAV) and Lys-109. A disordered region spans residues 119–149 (RAKSQLLRQSRGPKRSSRWPKLPFSSPGTGT). The Proton acceptor role is filled by Asp-243. An autoinhibitory domain region spans residues 404-409 (FSAITK). Residues 407-431 (ITKNFGHVLAVMKAAKKFKSLQGPT) form a calmodulin-binding region. The tract at residues 453–472 (PTQMDPEESVSLPSPLPYKK) is disordered.

The protein belongs to the protein kinase superfamily. Ser/Thr protein kinase family.

The enzyme catalyses L-seryl-[protein] + ATP = O-phospho-L-seryl-[protein] + ADP + H(+). It carries out the reaction L-threonyl-[protein] + ATP = O-phospho-L-threonyl-[protein] + ADP + H(+). With respect to regulation, activated by Ca(2+)/calmodulin. Binding of calmodulin may relieve intrasteric autoinhibition. Calcium/calmodulin-dependent protein kinase that operates in the calcium-triggered CaMKK-CaMK1 signaling cascade. Phosphorylates and activates cmkB in vitro. Required in G1-phase of the cell cycle for proper timing of the initial nuclear division after germination as well as for subsequent nuclear division cycles. Required for the normal temporal regulation of nimX activity. This Emericella nidulans (Aspergillus nidulans) protein is Calcium/calmodulin-dependent protein kinase kinase cmkC.